The sequence spans 545 residues: Sphingomyelin phosphodiesterase 5 (545 aa).

The N-terminal 35 residues, 1 to 35, are a transit peptide targeting the mitochondrion; the sequence is MSLRESPFPNGFLEGLHAVGWGLIFPCFWFLDRLI. Residues 36–64 lie on the Mitochondrial matrix side of the membrane; it reads AVCISTTLERMWRLEQECYLHPLKVVFGS. A helical; Signal-anchor for type II membrane protein transmembrane segment spans residues 65–85; sequence ILFFILFVISTPFALLGFILW. Residues 86–545 lie on the Mitochondrial intermembrane side of the membrane; that stretch reads APLQAIRRPF…LSVSLDSEQN (460 aa). Position 258 (Glu-258) interacts with Mg(2+). His-529 serves as the catalytic Proton acceptor.

It belongs to the neutral sphingomyelinase family. The cofactor is Mg(2+). Mn(2+) is required as a cofactor.

It is found in the mitochondrion inner membrane. The protein resides in the endoplasmic reticulum membrane. The catalysed reaction is a sphingomyelin + H2O = phosphocholine + an N-acylsphing-4-enine + H(+). It catalyses the reaction N-(hexadecanoyl)-sphing-4-enine-1-phosphocholine + H2O = N-hexadecanoylsphing-4-enine + phosphocholine + H(+). Its pathway is lipid metabolism; sphingolipid metabolism. Activated by the phospholipids cardiolipin, phosphatidylserine, and phosphatidylethanolamine. Strongest activation with cardiolipin. Its function is as follows. Catalyzes the hydrolysis of membrane sphingomyelin to form phosphorylcholine and ceramide. The protein is Sphingomyelin phosphodiesterase 5 of Danio rerio (Zebrafish).